A 757-amino-acid chain; its full sequence is MDVNPTLLFLKVPAQNAISTTFPYTGDPPYSHGTGTGYTMDTVNRTHQYSERGKWTTNTETGAPQLNPIDGPLPEDNEPSGYAQTDCVLEAMAFLEESHPGIFENSCLETMEVVQQTRVDKLTQGRQTYDWTLNRNQPAATALANTIEVFRSNGLTANESGRLIDFLKDVMESMDKEEIEITTHFQRKRRVRDNMTKKMVTQRTIGKKKQRVNKRSYLIRALTLNTMTKDAERGKLKRRAIATPGMQIRGFVYFVETLARSICEKLEQSGLPVGGNEKKAKLANVVRKMMTNSQDTELSFTITGDNTKWNENQNPRMFLAMITYITKNQPEWFRNILSIAPIMFSNKMARLGKGYMFESKRMKLRTQIPAEMLASIDLKYFNESTRKKIEKIRPLLIDGTASLSPGMMMGMFNMLSTVLGVSILNLGQKKYTKTTYWWDGLQSSDDFALIVNAPNHEGIQAGVDRFYRTCKLVGINMSKKKSYINKTGTFEFTSFFYRYGFVANFSMELPSFGVSGINESADMSIGVTVIKNNMINNDLGPATAQMALQLFIKDYRYTYRCHRGDTQIQTRRSFELKKLWDQTQSKAGLLVSDGGPNLYNIRNLHIPEVCLKWELMDEDYQGRLCNPLNPFVSHKEIESVNNAVVMPAHGPAKSMEYDAVATTHSWIPKRNRSILNTSQRGILEDEQMYQKCCNLFEKFFPSSSYRRPVGISSMVEAMVSRARIDARIDFESGRIKKEEFSEIMKICSTIEELRRQK.

A disordered region spans residues 52–82; the sequence is RGKWTTNTETGAPQLNPIDGPLPEDNEPSGY. Polar residues predominate over residues 55–64; the sequence is WTTNTETGAP. 2 consecutive short sequence motifs (nuclear localization signal) follow at residues 187-195 and 203-216; these read RKRRVRDNM and RTIG…NKRS. A promoter-binding site region spans residues 249–256; that stretch reads RGFVYFVE. One can recognise a RdRp catalytic domain in the interval 286–483; sequence VRKMMTNSQD…GINMSKKKSY (198 aa).

It belongs to the influenza viruses polymerase PB1 family. As to quaternary structure, influenza RNA polymerase is composed of three subunits: PB1, PB2 and PA. Interacts (via N-terminus) with PA (via C-terminus). Interacts (via C-terminus) with PB2 (via N-terminus); this interaction is essential for transcription initiation. Phosphorylated by host PRKCA.

Its subcellular location is the host nucleus. The protein resides in the host cytoplasm. The catalysed reaction is RNA(n) + a ribonucleoside 5'-triphosphate = RNA(n+1) + diphosphate. Functionally, RNA-dependent RNA polymerase which is responsible for replication and transcription of virus RNA segments. The transcription of viral mRNAs occurs by a unique mechanism called cap-snatching. 5' methylated caps of cellular mRNAs are cleaved after 10-13 nucleotides by PA. In turn, these short capped RNAs are used as primers by PB1 for transcription of viral mRNAs. During virus replication, PB1 initiates RNA synthesis and copy vRNA into complementary RNA (cRNA) which in turn serves as a template for the production of more vRNAs. This chain is RNA-directed RNA polymerase catalytic subunit, found in Influenza A virus (strain A/Kitakyushu/159/1993 H3N2).